Reading from the N-terminus, the 171-residue chain is Large ribosomal subunit protein uL10 (171 aa).

Belongs to the universal ribosomal protein uL10 family. In terms of assembly, part of the ribosomal stalk of the 50S ribosomal subunit. The N-terminus interacts with L11 and the large rRNA to form the base of the stalk. The C-terminus forms an elongated spine to which L12 dimers bind in a sequential fashion forming a multimeric L10(L12)X complex.

In terms of biological role, forms part of the ribosomal stalk, playing a central role in the interaction of the ribosome with GTP-bound translation factors. This chain is Large ribosomal subunit protein uL10, found in Paracoccus denitrificans (strain Pd 1222).